A 421-amino-acid polypeptide reads, in one-letter code: Early growth response protein 2 (421 aa).

A compositionally biased stretch (low complexity) spans 127–145; sequence CSSTSSSNASSGSPNLSCS. Disordered stretches follow at residues 127 to 152, 179 to 200, and 223 to 288; these read CSST…PQSD, SPTA…ASDG, and SDRK…ERPY. Polar residues predominate over residues 236–247; it reads PLSTIRNFTLGG. 3 consecutive C2H2-type zinc fingers follow at residues 288–312, 318–340, and 346–368; these read YPCP…IRIH, FQCR…IRTH, and FACD…TKIH.

Belongs to the EGR C2H2-type zinc-finger protein family.

It is found in the nucleus. Functionally, sequence-specific DNA-binding transcription factor. This Xenopus laevis (African clawed frog) protein is Early growth response protein 2 (egr2).